Here is a 156-residue protein sequence, read N- to C-terminus: Small ribosomal subunit protein uS7 (156 aa).

Belongs to the universal ribosomal protein uS7 family. As to quaternary structure, part of the 30S ribosomal subunit. Contacts proteins S9 and S11.

In terms of biological role, one of the primary rRNA binding proteins, it binds directly to 16S rRNA where it nucleates assembly of the head domain of the 30S subunit. Is located at the subunit interface close to the decoding center, probably blocks exit of the E-site tRNA. The protein is Small ribosomal subunit protein uS7 of Actinobacillus pleuropneumoniae serotype 5b (strain L20).